Reading from the N-terminus, the 175-residue chain is NADH-ubiquinone oxidoreductase chain 6 (175 aa).

6 helical membrane passes run 1-21 (MMYI…GFSS), 24-44 (SPVY…GIIM), 51-71 (LGLV…GYTI), 87-107 (VVLS…VWLF), 113-133 (LVGF…GSFG), and 148-168 (YGFW…FIAI).

Belongs to the complex I subunit 6 family. In terms of assembly, core subunit of respiratory chain NADH dehydrogenase (Complex I) which is composed of 45 different subunits.

It localises to the mitochondrion inner membrane. It carries out the reaction a ubiquinone + NADH + 5 H(+)(in) = a ubiquinol + NAD(+) + 4 H(+)(out). Its function is as follows. Core subunit of the mitochondrial membrane respiratory chain NADH dehydrogenase (Complex I) which catalyzes electron transfer from NADH through the respiratory chain, using ubiquinone as an electron acceptor. Essential for the catalytic activity and assembly of complex I. In Mammuthus primigenius (Siberian woolly mammoth), this protein is NADH-ubiquinone oxidoreductase chain 6 (MT-ND6).